Consider the following 365-residue polypeptide: UDP-N-acetylglucosamine--N-acetylmuramyl-(pentapeptide) pyrophosphoryl-undecaprenol N-acetylglucosamine transferase (365 aa).

Residues 19-21 (TGG), Asn-131, Arg-170, Ser-201, Ile-255, 274-279 (ALTVTE), and Gln-300 each bind UDP-N-acetyl-alpha-D-glucosamine.

Belongs to the glycosyltransferase 28 family. MurG subfamily.

It localises to the cell inner membrane. The enzyme catalyses di-trans,octa-cis-undecaprenyl diphospho-N-acetyl-alpha-D-muramoyl-L-alanyl-D-glutamyl-meso-2,6-diaminopimeloyl-D-alanyl-D-alanine + UDP-N-acetyl-alpha-D-glucosamine = di-trans,octa-cis-undecaprenyl diphospho-[N-acetyl-alpha-D-glucosaminyl-(1-&gt;4)]-N-acetyl-alpha-D-muramoyl-L-alanyl-D-glutamyl-meso-2,6-diaminopimeloyl-D-alanyl-D-alanine + UDP + H(+). It participates in cell wall biogenesis; peptidoglycan biosynthesis. Cell wall formation. Catalyzes the transfer of a GlcNAc subunit on undecaprenyl-pyrophosphoryl-MurNAc-pentapeptide (lipid intermediate I) to form undecaprenyl-pyrophosphoryl-MurNAc-(pentapeptide)GlcNAc (lipid intermediate II). This Acinetobacter baumannii (strain ACICU) protein is UDP-N-acetylglucosamine--N-acetylmuramyl-(pentapeptide) pyrophosphoryl-undecaprenol N-acetylglucosamine transferase.